Consider the following 425-residue polypeptide: Serine--tRNA ligase (425 aa).

Position 230–232 (T230–E232) interacts with L-serine. Residue R261 to E263 coordinates ATP. E284 contributes to the L-serine binding site. ATP is bound at residue E348–S351. S384 serves as a coordination point for L-serine.

This sequence belongs to the class-II aminoacyl-tRNA synthetase family. Type-1 seryl-tRNA synthetase subfamily. In terms of assembly, homodimer. The tRNA molecule binds across the dimer.

It is found in the cytoplasm. The enzyme catalyses tRNA(Ser) + L-serine + ATP = L-seryl-tRNA(Ser) + AMP + diphosphate + H(+). It carries out the reaction tRNA(Sec) + L-serine + ATP = L-seryl-tRNA(Sec) + AMP + diphosphate + H(+). The protein operates within aminoacyl-tRNA biosynthesis; selenocysteinyl-tRNA(Sec) biosynthesis; L-seryl-tRNA(Sec) from L-serine and tRNA(Sec): step 1/1. Its function is as follows. Catalyzes the attachment of serine to tRNA(Ser). Is also able to aminoacylate tRNA(Sec) with serine, to form the misacylated tRNA L-seryl-tRNA(Sec), which will be further converted into selenocysteinyl-tRNA(Sec). In Maridesulfovibrio salexigens (strain ATCC 14822 / DSM 2638 / NCIMB 8403 / VKM B-1763) (Desulfovibrio salexigens), this protein is Serine--tRNA ligase.